We begin with the raw amino-acid sequence, 754 residues long: DNA topoisomerase 4 subunit A (754 aa).

Positions 38–501 constitute a Topo IIA-type catalytic domain; that stretch reads LPHIGDGLKP…EARALSETEL (464 aa). Tyr127 serves as the catalytic O-(5'-phospho-DNA)-tyrosine intermediate.

The protein belongs to the type II topoisomerase GyrA/ParC subunit family. ParC type 1 subfamily. In terms of assembly, heterotetramer composed of ParC and ParE.

Its subcellular location is the cell membrane. The catalysed reaction is ATP-dependent breakage, passage and rejoining of double-stranded DNA.. In terms of biological role, topoisomerase IV is essential for chromosome segregation. It relaxes supercoiled DNA. Performs the decatenation events required during the replication of a circular DNA molecule. In Pseudomonas aeruginosa (strain ATCC 15692 / DSM 22644 / CIP 104116 / JCM 14847 / LMG 12228 / 1C / PRS 101 / PAO1), this protein is DNA topoisomerase 4 subunit A.